Reading from the N-terminus, the 87-residue chain is Cytochrome c oxidase subunit 6B1 (87 aa).

A CHCH domain is found at 28–74 (TRNCWQNYLDFHRCQKAMTTKGGNVSVCEWYQRVYQSLCPTSWVTDW). The Cx9C motif motif lies at 31–41 (CWQNYLDFHRC). 2 disulfide bridges follow: cysteine 31-cysteine 66 and cysteine 41-cysteine 55. The Cx10C motif motif lies at 55 to 66 (CEWYQRVYQSLC).

The protein localises to the mitochondrion intermembrane space. Functionally, connects the two COX monomers into the physiological dimeric form. The protein is Cytochrome c oxidase subunit 6B1 (COX6B1) of Macaca fascicularis (Crab-eating macaque).